The sequence spans 126 residues: Protein ApaG (126 aa).

In terms of domain architecture, ApaG spans 2 to 126; the sequence is SALDTSIRVE…FRLATPGLLH (125 aa).

The protein is Protein ApaG of Shewanella baltica (strain OS223).